The sequence spans 100 residues: Glutamyl-tRNA(Gln) amidotransferase subunit C (100 aa).

Belongs to the GatC family. As to quaternary structure, heterotrimer of A, B and C subunits.

The enzyme catalyses L-glutamyl-tRNA(Gln) + L-glutamine + ATP + H2O = L-glutaminyl-tRNA(Gln) + L-glutamate + ADP + phosphate + H(+). It catalyses the reaction L-aspartyl-tRNA(Asn) + L-glutamine + ATP + H2O = L-asparaginyl-tRNA(Asn) + L-glutamate + ADP + phosphate + 2 H(+). Its function is as follows. Allows the formation of correctly charged Asn-tRNA(Asn) or Gln-tRNA(Gln) through the transamidation of misacylated Asp-tRNA(Asn) or Glu-tRNA(Gln) in organisms which lack either or both of asparaginyl-tRNA or glutaminyl-tRNA synthetases. The reaction takes place in the presence of glutamine and ATP through an activated phospho-Asp-tRNA(Asn) or phospho-Glu-tRNA(Gln). The chain is Glutamyl-tRNA(Gln) amidotransferase subunit C from Rickettsia conorii (strain ATCC VR-613 / Malish 7).